A 626-amino-acid chain; its full sequence is UvrABC system protein C (626 aa).

One can recognise a GIY-YIG domain in the interval 20-97 (ECSGVYKMLD…IKKFQPKFNI (78 aa)). Positions 207–242 (IALQANLSKKMQELSSQMRFEEAAEIRDRIKALSYV) constitute a UVR domain.

The protein belongs to the UvrC family. As to quaternary structure, interacts with UvrB in an incision complex.

The protein localises to the cytoplasm. In terms of biological role, the UvrABC repair system catalyzes the recognition and processing of DNA lesions. UvrC both incises the 5' and 3' sides of the lesion. The N-terminal half is responsible for the 3' incision and the C-terminal half is responsible for the 5' incision. The chain is UvrABC system protein C from Rickettsia prowazekii (strain Madrid E).